We begin with the raw amino-acid sequence, 166 residues long: MNYTSYILAFQLCVILCSSGYYCQAMFFKEIENLKEYFNASNPDVADGGPLFLDILKNWREESDKTIIQSQIVSFYLKLFENFKDNQIIQRSMDTIKEDMLFKFFNSSTSKRSDFLKLIQIPVNDMQVQRKAINELIKVMNDLSPRSNLTKRKRSQNLFRGRRASK.

Positions 1-23 (MNYTSYILAFQLCVILCSSGYYC) are cleaved as a signal peptide. Position 24 is a pyrrolidone carboxylic acid (glutamine 24). 2 N-linked (GlcNAc...) asparagine glycosylation sites follow: asparagine 39 and asparagine 106.

The protein belongs to the type II (or gamma) interferon family. Homodimer. Interacts with IFNGR1 (via extracellular domain); this interaction promotes IFNGR1 dimerization. Released primarily from activated T lymphocytes.

The protein localises to the secreted. Type II interferon produced by immune cells such as T-cells and NK cells that plays crucial roles in antimicrobial, antiviral, and antitumor responses by activating effector immune cells and enhancing antigen presentation. Primarily signals through the JAK-STAT pathway after interaction with its receptor IFNGR1 to affect gene regulation. Upon IFNG binding, IFNGR1 intracellular domain opens out to allow association of downstream signaling components JAK2, JAK1 and STAT1, leading to STAT1 activation, nuclear translocation and transcription of IFNG-regulated genes. Many of the induced genes are transcription factors such as IRF1 that are able to further drive regulation of a next wave of transcription. Plays a role in class I antigen presentation pathway by inducing a replacement of catalytic proteasome subunits with immunoproteasome subunits. In turn, increases the quantity, quality, and repertoire of peptides for class I MHC loading. Increases the efficiency of peptide generation also by inducing the expression of activator PA28 that associates with the proteasome and alters its proteolytic cleavage preference. Up-regulates as well MHC II complexes on the cell surface by promoting expression of several key molecules such as cathepsins B/CTSB, H/CTSH, and L/CTSL. Participates in the regulation of hematopoietic stem cells during development and under homeostatic conditions by affecting their development, quiescence, and differentiation. The protein is Interferon gamma (IFNG) of Ailuropoda melanoleuca (Giant panda).